The sequence spans 284 residues: Trimeric intracellular cation channel type B-A (284 aa).

At 1–15 (MESLSELSVQFSQLS) the chain is on the lumenal side. Residues 16 to 33 (MFPFFDMAHYVVSVMSAR) traverse the membrane as a helical segment. Residues 34-46 (EQAGALDIAARSP) lie on the Cytoplasmic side of the membrane. The helical transmembrane segment at 47 to 68 (MASWFSAMLYCFGGGILSSILL) threads the bilayer. Topologically, residues 69–79 (AEPPIAVLSNT) are lumenal. The helical transmembrane segment at 80-99 (TNIMLASTIWYMVYYFPYDL) threads the bilayer. The Cytoplasmic portion of the chain corresponds to 100–102 (FYN). Residues 103–121 (CFFFLPIRLIIAGMKEVTR) form a helical membrane-spanning segment. Positions 117 and 121 each coordinate a 1,2-diacyl-sn-glycero-3-phospho-(1D-myo-inositol-4,5-bisphosphate). At 122 to 137 (TWKILSGVTHAHSHYK) the chain is on the lumenal side. A helical membrane pass occupies residues 138–155 (DALLVMITIGWARGAGGG). Residues 156 to 177 (LISNFEQLVRGVWKPESNEFLK) are Cytoplasmic-facing. Residues 178–195 (MSYPVKVTLIGAVLFTLQ) form a helical membrane-spanning segment. Residues 196-206 (HGHYLPISRHN) are Lumenal-facing. Residues 207-224 (LMLIYTMFLVLIKVTMML) traverse the membrane as a helical segment. The Cytoplasmic portion of the chain corresponds to 225–284 (THSTASPFLPLETPLQRILFGQRQKPSEVRQSASSSGAKGKPSKKTLDKDSGEQSKKKDS). The disordered stretch occupies residues 246–284 (QRQKPSEVRQSASSSGAKGKPSKKTLDKDSGEQSKKKDS). The span at 269–284 (KTLDKDSGEQSKKKDS) shows a compositional bias: basic and acidic residues.

It belongs to the TMEM38 family. As to quaternary structure, homotrimer; conformation seems to be controled by binding to diacylglycerol (DAG).

The protein localises to the endoplasmic reticulum membrane. It catalyses the reaction K(+)(in) = K(+)(out). Channel activity is activated by increased cytosolic Ca(2+) levels and blocked by luminal high Ca(2+) levels. Its function is as follows. Intracellular monovalent cation channel required for maintenance of rapid intracellular calcium release. Acts as a potassium counter-ion channel that functions in synchronization with calcium release from intracellular stores. Activated by increased cytosolic Ca(2+) levels. The polypeptide is Trimeric intracellular cation channel type B-A (tmem38b-a) (Xenopus laevis (African clawed frog)).